Reading from the N-terminus, the 404-residue chain is Probable tRNA sulfurtransferase (404 aa).

The THUMP domain occupies 60–165 (EPVAEALKNV…DEAAYISHEE (106 aa)). ATP-binding positions include 183–184 (ML), 208–209 (HF), arginine 265, glycine 287, and glutamine 296.

Belongs to the ThiI family.

Its subcellular location is the cytoplasm. It carries out the reaction [ThiI sulfur-carrier protein]-S-sulfanyl-L-cysteine + a uridine in tRNA + 2 reduced [2Fe-2S]-[ferredoxin] + ATP + H(+) = [ThiI sulfur-carrier protein]-L-cysteine + a 4-thiouridine in tRNA + 2 oxidized [2Fe-2S]-[ferredoxin] + AMP + diphosphate. The catalysed reaction is [ThiS sulfur-carrier protein]-C-terminal Gly-Gly-AMP + S-sulfanyl-L-cysteinyl-[cysteine desulfurase] + AH2 = [ThiS sulfur-carrier protein]-C-terminal-Gly-aminoethanethioate + L-cysteinyl-[cysteine desulfurase] + A + AMP + 2 H(+). The protein operates within cofactor biosynthesis; thiamine diphosphate biosynthesis. Functionally, catalyzes the ATP-dependent transfer of a sulfur to tRNA to produce 4-thiouridine in position 8 of tRNAs, which functions as a near-UV photosensor. Also catalyzes the transfer of sulfur to the sulfur carrier protein ThiS, forming ThiS-thiocarboxylate. This is a step in the synthesis of thiazole, in the thiamine biosynthesis pathway. The sulfur is donated as persulfide by IscS. The protein is Probable tRNA sulfurtransferase of Streptococcus uberis (strain ATCC BAA-854 / 0140J).